The sequence spans 99 residues: Large ribosomal subunit protein bL27 (99 aa).

The disordered stretch occupies residues 1–21; sequence MAHKKGGGSTRNGRDSRAKRL.

It belongs to the bacterial ribosomal protein bL27 family.

In Thermomicrobium roseum (strain ATCC 27502 / DSM 5159 / P-2), this protein is Large ribosomal subunit protein bL27.